A 375-amino-acid polypeptide reads, in one-letter code: Erythronate-4-phosphate dehydrogenase (375 aa).

Serine 49 is a binding site for substrate. Positions 150 and 178 each coordinate NAD(+). Arginine 211 is a catalytic residue. An NAD(+)-binding site is contributed by aspartate 231. The active site involves glutamate 236. Histidine 253 functions as the Proton donor in the catalytic mechanism. Residue glycine 256 coordinates NAD(+).

It belongs to the D-isomer specific 2-hydroxyacid dehydrogenase family. PdxB subfamily. In terms of assembly, homodimer.

Its subcellular location is the cytoplasm. The enzyme catalyses 4-phospho-D-erythronate + NAD(+) = (R)-3-hydroxy-2-oxo-4-phosphooxybutanoate + NADH + H(+). It functions in the pathway cofactor biosynthesis; pyridoxine 5'-phosphate biosynthesis; pyridoxine 5'-phosphate from D-erythrose 4-phosphate: step 2/5. Catalyzes the oxidation of erythronate-4-phosphate to 3-hydroxy-2-oxo-4-phosphonooxybutanoate. This is Erythronate-4-phosphate dehydrogenase from Hydrogenovibrio crunogenus (strain DSM 25203 / XCL-2) (Thiomicrospira crunogena).